A 452-amino-acid chain; its full sequence is UPF0210 protein Hore_14430 (452 aa).

This sequence belongs to the UPF0210 family. Homodimer.

The chain is UPF0210 protein Hore_14430 from Halothermothrix orenii (strain H 168 / OCM 544 / DSM 9562).